The sequence spans 604 residues: Pescadillo homolog (604 aa).

Positions 349-448 (PTSTLFSKFI…ELLPVNKYAP (100 aa)) constitute a BRCT domain. 2 disordered regions span residues 452–562 (LPPH…MTNK) and 579–604 (TRTQELAKKKRKIEKTKAQLDKLSKK). Coiled coils occupy residues 468-522 (EAEK…LEAA) and 573-604 (GIDKKETRTQELAKKKRKIEKTKAQLDKLSKK). The segment covering 476–510 (ENAEEEEEDEVDEDDEDADEDEEDEEEEDEEEDED) has biased composition (acidic residues). Positions 593–604 (KTKAQLDKLSKK) are enriched in basic and acidic residues.

It belongs to the pescadillo family. As to quaternary structure, component of the NOP7 complex, composed of ERB1, NOP7 and YTM1. The complex is held together by ERB1, which interacts with NOP7 via its N-terminal domain and with YTM1 via a high-affinity interaction between the seven-bladed beta-propeller domains of the 2 proteins. The NOP7 complex associates with the 66S pre-ribosome.

It is found in the nucleus. Its subcellular location is the nucleolus. It localises to the nucleoplasm. Functionally, component of the NOP7 complex, which is required for maturation of the 25S and 5.8S ribosomal RNAs and formation of the 60S ribosome. This Scheffersomyces stipitis (strain ATCC 58785 / CBS 6054 / NBRC 10063 / NRRL Y-11545) (Yeast) protein is Pescadillo homolog.